Reading from the N-terminus, the 265-residue chain is Methyl-coenzyme M reductase II subunit gamma (265 aa).

Arg-123 contacts coenzyme M.

The protein belongs to the methyl-coenzyme M reductase gamma subunit family. In terms of assembly, MCR is a hexamer of two alpha, two beta, and two gamma chains, forming a dimer of heterotrimers. Coenzyme F430 is required as a cofactor.

It carries out the reaction coenzyme B + methyl-coenzyme M = methane + coenzyme M-coenzyme B heterodisulfide. Its pathway is one-carbon metabolism; methyl-coenzyme M reduction; methane from methyl-coenzyme M: step 1/1. Component of the methyl-coenzyme M reductase (MCR) I that catalyzes the reductive cleavage of methyl-coenzyme M (CoM-S-CH3 or 2-(methylthio)ethanesulfonate) using coenzyme B (CoB or 7-mercaptoheptanoylthreonine phosphate) as reductant which results in the production of methane and the mixed heterodisulfide of CoB and CoM (CoM-S-S-CoB). This is the final step in methanogenesis. In Methanothermobacter thermautotrophicus (strain ATCC 29096 / DSM 1053 / JCM 10044 / NBRC 100330 / Delta H) (Methanobacterium thermoautotrophicum), this protein is Methyl-coenzyme M reductase II subunit gamma (mrtG).